The primary structure comprises 358 residues: Secreted protein RBT4 (358 aa).

The first 19 residues, 1 to 19 (MKFSQVATTAAIFAGLTTA), serve as a signal peptide directing secretion. 3 stretches are compositionally biased toward low complexity: residues 48 to 63 (VTGG…QSAA), 153 to 174 (TTEV…VATP), and 189 to 200 (AATTASGSSSGS). 2 disordered regions span residues 48–98 (VTGG…DGGN) and 144–203 (GFPS…SNDF). The region spanning 216-332 (LDAHNKKRAR…NWGLYVVCSY (117 aa)) is the SCP domain.

Belongs to the CRISP family.

It localises to the secreted. Its function is as follows. Secreted protein that acts as a virulence factor during infections such as in posttraumatic corneal infections. Acts as an important antigen in patients with systemic candidiasis and plays a role in the protection against phagocyte attack. This is Secreted protein RBT4 (RBT4) from Candida albicans (strain SC5314 / ATCC MYA-2876) (Yeast).